A 106-amino-acid polypeptide reads, in one-letter code: Large ribosomal subunit protein bL21 (106 aa).

The protein belongs to the bacterial ribosomal protein bL21 family. As to quaternary structure, part of the 50S ribosomal subunit. Contacts protein L20.

In terms of biological role, this protein binds to 23S rRNA in the presence of protein L20. The protein is Large ribosomal subunit protein bL21 of Thermosipho africanus (strain TCF52B).